A 250-amino-acid polypeptide reads, in one-letter code: Phosphoribosylaminoimidazole-succinocarboxamide synthase (250 aa).

The protein belongs to the SAICAR synthetase family.

The catalysed reaction is 5-amino-1-(5-phospho-D-ribosyl)imidazole-4-carboxylate + L-aspartate + ATP = (2S)-2-[5-amino-1-(5-phospho-beta-D-ribosyl)imidazole-4-carboxamido]succinate + ADP + phosphate + 2 H(+). It participates in purine metabolism; IMP biosynthesis via de novo pathway; 5-amino-1-(5-phospho-D-ribosyl)imidazole-4-carboxamide from 5-amino-1-(5-phospho-D-ribosyl)imidazole-4-carboxylate: step 1/2. The chain is Phosphoribosylaminoimidazole-succinocarboxamide synthase from Picosynechococcus sp. (strain ATCC 27264 / PCC 7002 / PR-6) (Agmenellum quadruplicatum).